We begin with the raw amino-acid sequence, 140 residues long: Nucleoside diphosphate kinase (140 aa).

6 residues coordinate ATP: Lys-11, Phe-59, Arg-87, Thr-93, Arg-104, and Asn-114. His-117 (pros-phosphohistidine intermediate) is an active-site residue.

Belongs to the NDK family. As to quaternary structure, homotetramer. The cofactor is Mg(2+).

It localises to the cytoplasm. The enzyme catalyses a 2'-deoxyribonucleoside 5'-diphosphate + ATP = a 2'-deoxyribonucleoside 5'-triphosphate + ADP. It catalyses the reaction a ribonucleoside 5'-diphosphate + ATP = a ribonucleoside 5'-triphosphate + ADP. Major role in the synthesis of nucleoside triphosphates other than ATP. The ATP gamma phosphate is transferred to the NDP beta phosphate via a ping-pong mechanism, using a phosphorylated active-site intermediate. The protein is Nucleoside diphosphate kinase of Bartonella henselae (strain ATCC 49882 / DSM 28221 / CCUG 30454 / Houston 1) (Rochalimaea henselae).